Here is a 227-residue protein sequence, read N- to C-terminus: Chalcone--flavanone isomerase (227 aa).

Thr50, Asn115, and Ser192 together coordinate substrate.

The protein belongs to the chalcone isomerase family. As to expression, fibers.

The catalysed reaction is a chalcone = a flavanone.. Its pathway is secondary metabolite biosynthesis; flavonoid biosynthesis. In terms of biological role, catalyzes the intramolecular cyclization of bicyclic chalcones into tricyclic (S)-flavanones. Responsible for the isomerization of 4,2',4',6'-tetrahydroxychalcone (also termed chalcone) into naringenin. The chain is Chalcone--flavanone isomerase (CHI) from Gossypium hirsutum (Upland cotton).